We begin with the raw amino-acid sequence, 464 residues long: Na(+)/H(+) antiporter NhaA 2 (464 aa).

Transmembrane regions (helical) follow at residues 53-73 (VGGIILLVAAAAALIWANSPW), 96-116 (LTLGAWAADGLLAIFFLVVGL), 134-154 (ALPIAAAVGGMVVPALIFVLV), 165-185 (GWAIPTATDIAFAVAVLAVIS), 195-215 (FLLTLAVVDDLLAITVIAVFY), 219-239 (IKAWALALAVVPLALFTVCAQ), 257-277 (VLVHESGVHATVAGVLLGFAV), 313-333 (IAIPVFAFFAAGVSIGGLSGL), 340-360 (PITLGIVLGLVAGKPIGILVT), 378-398 (WVDVLGMSMLAGIGFTVSLLI), and 412-432 (FVKIGVLSGSLLAASLAAIVL).

The protein belongs to the NhaA Na(+)/H(+) (TC 2.A.33) antiporter family.

It localises to the cell membrane. The catalysed reaction is Na(+)(in) + 2 H(+)(out) = Na(+)(out) + 2 H(+)(in). Functionally, na(+)/H(+) antiporter that extrudes sodium in exchange for external protons. The sequence is that of Na(+)/H(+) antiporter NhaA 2 from Mycolicibacterium vanbaalenii (strain DSM 7251 / JCM 13017 / BCRC 16820 / KCTC 9966 / NRRL B-24157 / PYR-1) (Mycobacterium vanbaalenii).